Consider the following 718-residue polypeptide: Manganese-exporting P-type ATPase (718 aa).

Residues 11–78 (GRMRVKVDWV…AIKGAAHVAA (68 aa)) form the HMA domain. Transmembrane regions (helical) follow at residues 87 to 105 (HSAE…GGVA), 128 to 146 (TVAT…RGAL), 154 to 168 (AGTD…VASL), 177 to 191 (LTVL…YLQD), 327 to 351 (VGEN…LITG), and 357 to 375 (MTML…TPTA). Asp408 (4-aspartylphosphate intermediate) is an active-site residue. The Mg(2+) site is built by Asp408, Thr410, and Asp610. Transmembrane regions (helical) follow at residues 661 to 680 (AVDV…AAGL) and 690 to 709 (PVLA…ANSS).

The protein belongs to the cation transport ATPase (P-type) (TC 3.A.3) family. Type IB subfamily.

The protein localises to the cell membrane. The catalysed reaction is Mn(2+)(in) + ATP + H2O = Mn(2+)(out) + ADP + phosphate + H(+). In terms of biological role, high affinity, slow turnover Mn(2+) transporting ATPase. The chain is Manganese-exporting P-type ATPase (ctpC) from Mycobacterium bovis (strain ATCC BAA-935 / AF2122/97).